The sequence spans 458 residues: tRNA-2-methylthio-N(6)-dimethylallyladenosine synthase (458 aa).

The MTTase N-terminal domain maps to 15-134 (KKVFIKTYGC…LPDLLEQTKQ (120 aa)). C24, C60, C97, C175, C179, and C182 together coordinate [4Fe-4S] cluster. The 233-residue stretch at 161–393 (RKRGVSAFLT…QVLLLEQQNA (233 aa)) folds into the Radical SAM core domain. The TRAM domain occupies 396-457 (RSKIGQTTDV…SNSFVGEIAN (62 aa)).

Belongs to the methylthiotransferase family. MiaB subfamily. In terms of assembly, monomer. The cofactor is [4Fe-4S] cluster.

The protein resides in the cytoplasm. It carries out the reaction N(6)-dimethylallyladenosine(37) in tRNA + (sulfur carrier)-SH + AH2 + 2 S-adenosyl-L-methionine = 2-methylsulfanyl-N(6)-dimethylallyladenosine(37) in tRNA + (sulfur carrier)-H + 5'-deoxyadenosine + L-methionine + A + S-adenosyl-L-homocysteine + 2 H(+). Catalyzes the methylthiolation of N6-(dimethylallyl)adenosine (i(6)A), leading to the formation of 2-methylthio-N6-(dimethylallyl)adenosine (ms(2)i(6)A) at position 37 in tRNAs that read codons beginning with uridine. This is tRNA-2-methylthio-N(6)-dimethylallyladenosine synthase from Bartonella quintana (strain Toulouse) (Rochalimaea quintana).